We begin with the raw amino-acid sequence, 558 residues long: Kelch-like protein 23 (558 aa).

The BTB domain occupies 36 to 104; sequence TDITLQCPSG…AYTSQIEITK (69 aa). The BACK domain maps to 139–240; that stretch reads CIGMHSFAEF…DPVYLKTALG (102 aa). 6 Kelch repeats span residues 274–320, 321–369, 370–416, 418–466, 467–508, and 510–557; these read TMYI…CLGP, NIYV…TLGG, CVYA…VLHE, IYVI…PFEN, KLYL…IMNG, and IYVT…CVYN.

The sequence is that of Kelch-like protein 23 (Klhl23) from Mus musculus (Mouse).